Consider the following 247-residue polypeptide: ATP synthase subunit a, chloroplastic (247 aa).

5 helical membrane passes run 38–58 (QVLI…TLAV), 95–115 (VPFI…GALL), 134–154 (INTT…AGLS), 199–219 (LVVV…VMFL), and 220–240 (GLFT…AYIG).

This sequence belongs to the ATPase A chain family. In terms of assembly, F-type ATPases have 2 components, CF(1) - the catalytic core - and CF(0) - the membrane proton channel. CF(1) has five subunits: alpha(3), beta(3), gamma(1), delta(1), epsilon(1). CF(0) has four main subunits: a, b, b' and c.

It is found in the plastid. Its subcellular location is the chloroplast thylakoid membrane. Functionally, key component of the proton channel; it plays a direct role in the translocation of protons across the membrane. This chain is ATP synthase subunit a, chloroplastic, found in Lemna minor (Common duckweed).